A 224-amino-acid chain; its full sequence is Agamous-like MADS-box protein AGL9 homolog (224 aa).

The MADS-box domain maps to 3–57 (RGRVELKRIEGKINRQVTFAKRRNGLLKKAYELSVLCDAEVALIIFSNRGKLYEF). The K-box domain maps to 89–179 (EISSQQEYLK…KQRLMEGSQL (91 aa)).

In terms of tissue distribution, flower specific.

It localises to the nucleus. Functionally, probable transcription factor active in inflorescence development and floral organogenesis. The chain is Agamous-like MADS-box protein AGL9 homolog (TDR5) from Solanum lycopersicum (Tomato).